A 341-amino-acid chain; its full sequence is Phosphoribosylformylglycinamidine cyclo-ligase (341 aa).

Belongs to the AIR synthase family.

It is found in the cytoplasm. The enzyme catalyses 2-formamido-N(1)-(5-O-phospho-beta-D-ribosyl)acetamidine + ATP = 5-amino-1-(5-phospho-beta-D-ribosyl)imidazole + ADP + phosphate + H(+). Its pathway is purine metabolism; IMP biosynthesis via de novo pathway; 5-amino-1-(5-phospho-D-ribosyl)imidazole from N(2)-formyl-N(1)-(5-phospho-D-ribosyl)glycinamide: step 2/2. The protein is Phosphoribosylformylglycinamidine cyclo-ligase of Synechococcus elongatus (strain ATCC 33912 / PCC 7942 / FACHB-805) (Anacystis nidulans R2).